The sequence spans 201 residues: ATP-dependent Clp protease proteolytic subunit (201 aa).

The active-site Nucleophile is Ser-101. His-126 is a catalytic residue.

The protein belongs to the peptidase S14 family. As to quaternary structure, component of the chloroplastic Clp protease core complex.

The protein resides in the plastid. The protein localises to the chloroplast stroma. It catalyses the reaction Hydrolysis of proteins to small peptides in the presence of ATP and magnesium. alpha-casein is the usual test substrate. In the absence of ATP, only oligopeptides shorter than five residues are hydrolyzed (such as succinyl-Leu-Tyr-|-NHMec, and Leu-Tyr-Leu-|-Tyr-Trp, in which cleavage of the -Tyr-|-Leu- and -Tyr-|-Trp bonds also occurs).. Cleaves peptides in various proteins in a process that requires ATP hydrolysis. Has a chymotrypsin-like activity. Plays a major role in the degradation of misfolded proteins. This Chaetosphaeridium globosum (Charophycean green alga) protein is ATP-dependent Clp protease proteolytic subunit.